Reading from the N-terminus, the 216-residue chain is Protein GrpE (216 aa).

Disordered regions lie at residues 1–45 (MTEE…LDPT) and 185–216 (RVAV…TEEV). Over residues 205–216 (TDDEESGGTEEV) the composition is skewed to acidic residues.

It belongs to the GrpE family. In terms of assembly, homodimer.

The protein localises to the cytoplasm. Its function is as follows. Participates actively in the response to hyperosmotic and heat shock by preventing the aggregation of stress-denatured proteins, in association with DnaK and GrpE. It is the nucleotide exchange factor for DnaK and may function as a thermosensor. Unfolded proteins bind initially to DnaJ; upon interaction with the DnaJ-bound protein, DnaK hydrolyzes its bound ATP, resulting in the formation of a stable complex. GrpE releases ADP from DnaK; ATP binding to DnaK triggers the release of the substrate protein, thus completing the reaction cycle. Several rounds of ATP-dependent interactions between DnaJ, DnaK and GrpE are required for fully efficient folding. This Streptomyces griseus subsp. griseus (strain JCM 4626 / CBS 651.72 / NBRC 13350 / KCC S-0626 / ISP 5235) protein is Protein GrpE.